A 196-amino-acid chain; its full sequence is dTTP/UTP pyrophosphatase (196 aa).

Residue D72 is the Proton acceptor of the active site.

The protein belongs to the Maf family. YhdE subfamily. The cofactor is a divalent metal cation.

The protein resides in the cytoplasm. The catalysed reaction is dTTP + H2O = dTMP + diphosphate + H(+). It catalyses the reaction UTP + H2O = UMP + diphosphate + H(+). Functionally, nucleoside triphosphate pyrophosphatase that hydrolyzes dTTP and UTP. May have a dual role in cell division arrest and in preventing the incorporation of modified nucleotides into cellular nucleic acids. This Chlamydia caviae (strain ATCC VR-813 / DSM 19441 / 03DC25 / GPIC) (Chlamydophila caviae) protein is dTTP/UTP pyrophosphatase.